The sequence spans 696 residues: MATEFTGVWGRDSITLETGKWAKQAHGSVVYKTGNLVLLATVCAAEEPKEGQDFFPLTCEYTEKAYSVGRFPGGYFKREAKPAEHEVLLSRILDRPIRPMFPEGYFSEVQLLVQVLSADKQVSVQGHAINAASAALSVSSIPFAGPIAGARIGRIGGEFILNPTNEEITKSDLDLVVAGTKDAIVMIEGEASEISKEDMMAALRFAQEQLKFAVAMQEELAKKHGTVKKEVVLKAPDKDLHAKIREFAFDRLTLANKNADKAKRNDDIKAINKETVEHFKTLLAPEDKTKDIKHFLHELEYEVVRELVLGEGIRFDGRKTDEIRQISCEIDVLPGPHGSAVFTRGQTQSLGVMTLGTTSDNQRYETLEGSKEKNFMLHYNFPAFSVGEVRRNSGPGRREIGHGNLAERAIKKVLPTQTEFPYVIRLVSEILESNGSSSMASVCSGTLALMAGGVPISGAVSGIAMGLFSDEKGRFAVLSDIAGIEDHFGDMDFKLAGTKKGITAFQMDLKVNGLGLEVLQKAIEQAEVGRDHILGEMNKAISSVKGNLSENAPRITQKQIPKDRIGELIGPGGKMIRAIIEQSGSEISVDDSGKVTIASPSEESKEKAIAMIDGIFEEIEVGKIYDGVIKRIADFGAFVEILPGKEGLCHISKLDVKRVQSVRDIVSEGDKIKVKVISVDKMGKIDLSRKDVLLDN.

Mg(2+) contacts are provided by D486 and D492. Residues P553–I612 enclose the KH domain. One can recognise an S1 motif domain in the interval G622–K690.

Belongs to the polyribonucleotide nucleotidyltransferase family. Mg(2+) is required as a cofactor.

It localises to the cytoplasm. The enzyme catalyses RNA(n+1) + phosphate = RNA(n) + a ribonucleoside 5'-diphosphate. Involved in mRNA degradation. Catalyzes the phosphorolysis of single-stranded polyribonucleotides processively in the 3'- to 5'-direction. The sequence is that of Polyribonucleotide nucleotidyltransferase from Leptospira biflexa serovar Patoc (strain Patoc 1 / ATCC 23582 / Paris).